Reading from the N-terminus, the 26-residue chain is Stage V sporulation protein M (26 aa).

The segment at 3 to 9 is important for localization; it reads FYTIKLP.

As to quaternary structure, interacts with SpoIVA. May interact with the ATP-dependent protease FtsH.

The protein resides in the forespore outer membrane. Coordinates cortex and coat assembly during sporulation. Associates with the spore coat protein SpoIVA and with the outer forespore membrane, thereby serving as a membrane anchor that tethers SpoIVA and the entire spore coat to the forespore surface. May also serve as a competitive inhibitor of FtsH activity during sporulation. This is Stage V sporulation protein M from Bacillus subtilis (strain 168).